A 348-amino-acid polypeptide reads, in one-letter code: Fe-S cluster assembly protein DRE2 (348 aa).

The tract at residues 1-158 (MSQYKTGLLL…LPTFKKASSS (158 aa)) is N-terminal SAM-like domain. The segment at 137-170 (KTNNTKLQSGSKLPTFKKASSSTSNLPSFKKADH) is disordered. Positions 144–163 (QSGSKLPTFKKASSSTSNLP) are enriched in polar residues. A linker region spans residues 159 to 242 (TSNLPSFKKA…EEELIDEDGS (84 aa)). Ser-206 bears the Phosphoserine mark. Cys-252, Cys-263, Cys-266, and Cys-268 together coordinate [2Fe-2S] cluster. The fe-S binding site A stretch occupies residues 252 to 268 (CGKSKTKKKKACKDCTC). [4Fe-4S] cluster is bound by residues Cys-311, Cys-314, Cys-322, and Cys-325. Short sequence motifs (cx2C motif) lie at residues 311–314 (CGSC) and 322–325 (CSGC). Residues 311–325 (CGSCSLGDAFRCSGC) form a fe-S binding site B region.

The protein belongs to the anamorsin family. Monomer. Interacts with TAH18. Interacts with MIA40. [2Fe-2S] cluster is required as a cofactor. [4Fe-4S] cluster serves as cofactor. Ubiquitinated.

The protein localises to the cytoplasm. It is found in the mitochondrion intermembrane space. Functionally, component of the cytosolic iron-sulfur (Fe-S) protein assembly (CIA) machinery required for the maturation of extramitochondrial Fe-S proteins. Part of an electron transfer chain functioning in an early step of cytosolic Fe-S biogenesis, facilitating the de novo assembly of a [4Fe-4S] cluster on the scaffold complex CFD1-NBP35. Electrons are transferred to DRE2 from NADPH via the FAD- and FMN-containing protein TAH18. TAH18-DRE2 are also required for the assembly of the diferric tyrosyl radical cofactor of ribonucleotide reductase (RNR), probably by providing electrons for reduction during radical cofactor maturation in the catalytic small subunit RNR2. Has anti-apoptotic effects in the cell. Involved in negative control of H(2)O(2)-induced cell death. The sequence is that of Fe-S cluster assembly protein DRE2 from Saccharomyces cerevisiae (strain ATCC 204508 / S288c) (Baker's yeast).